Consider the following 472-residue polypeptide: Tryptophanase (472 aa).

Lys270 carries the post-translational modification N6-(pyridoxal phosphate)lysine.

Belongs to the beta-eliminating lyase family. As to quaternary structure, homotetramer. Pyridoxal 5'-phosphate serves as cofactor.

The enzyme catalyses L-tryptophan + H2O = indole + pyruvate + NH4(+). The protein operates within amino-acid degradation; L-tryptophan degradation via pyruvate pathway; indole and pyruvate from L-tryptophan: step 1/1. This Haemophilus influenzae (strain 86-028NP) protein is Tryptophanase.